The chain runs to 538 residues: ATP synthase subunit alpha, mitochondrial (538 aa).

G197 to T204 serves as a coordination point for ATP. An essential and sufficient for enterobactin binding region spans residues F228 to L248.

The protein belongs to the ATPase alpha/beta chains family. As to quaternary structure, subunit of the F-type ATPase which has 2 components, CF(1) - the catalytic core - and CF(0) - the membrane proton channel. As to expression, ubiquitous (at protein level).

It localises to the mitochondrion. It is found in the mitochondrion inner membrane. Functionally, mitochondrial membrane ATP synthase (F(1)F(0) ATP synthase or Complex V) produces ATP from ADP in the presence of a proton gradient across the membrane which is generated by electron transport complexes of the respiratory chain. F-type ATPases consist of two structural domains, F(1) - containing the extramembraneous catalytic core, and F(0) - containing the membrane proton channel, linked together by a central stalk and a peripheral stalk. During catalysis, ATP synthesis in the catalytic domain of F(1) is coupled via a rotary mechanism of the central stalk subunits to proton translocation. Subunits alpha and beta form the catalytic core in F(1). Rotation of the central stalk against the surrounding subunits leads to hydrolysis of ATP in three separate catalytic sites on the beta subunits. Subunit alpha does not bear the catalytic high-affinity ATP-binding sites. Binds the bacterial siderophore enterobactin and is required for the assimilation of enterobactin-bound iron from non-pathogenic bacteria. Promotes mitochondrial accumulation of enterobactin-derived iron ions. The chain is ATP synthase subunit alpha, mitochondrial from Caenorhabditis elegans.